The primary structure comprises 36 residues: MMDFNLPSIFVPLVGLVFPAIAMASLFLYVQKNKIV.

A helical transmembrane segment spans residues Phe-10 to Tyr-29.

Belongs to the PsaI family.

Its subcellular location is the plastid. The protein resides in the chloroplast thylakoid membrane. Its function is as follows. May help in the organization of the PsaL subunit. In Oryza nivara (Indian wild rice), this protein is Photosystem I reaction center subunit VIII.